Consider the following 144-residue polypeptide: Transmembrane protein 170A (144 aa).

Residues 1 to 50 lie on the Extracellular side of the membrane; it reads MEREGSGGGGGSAGLLQQILSLKLVPRVGNGTLCPNSTSLCSFPEMWYGV. 2 N-linked (GlcNAc...) asparagine glycosylation sites follow: asparagine 30 and asparagine 36. Residues 51–71 form a helical membrane-spanning segment; it reads FLWALMSSVFFHVPAGLLALF. Residues 72 to 85 are Cytoplasmic-facing; the sequence is TLRHHKYGRFMSVS. The chain crosses the membrane as a helical span at residues 86–106; it reads ILLMGIVGPITAGILTSAAIA. Residues 107–116 are Extracellular-facing; it reads GVYRAAGKEM. Residues 117–137 form a helical membrane-spanning segment; the sequence is IPFEALTLGTGQTFCVVVVSF. At 138 to 144 the chain is on the cytoplasmic side; that stretch reads LRVLATL.

This sequence belongs to the TMEM170 family. In terms of assembly, interacts with RTN4.

The protein resides in the endoplasmic reticulum membrane. The protein localises to the nucleus envelope. Acts as a regulator of endoplasmic reticulum (ER) and nuclear envelope (NE) morphogenesis. Affects the ratio between tubular ER and ER sheets by promoting sheet formation at the expense of tubules. Influences NE expansion, nuclear pore complex formation and proper localization of inner nuclear membrane proteins. In Mus musculus (Mouse), this protein is Transmembrane protein 170A (Tmem170a).